The following is a 178-amino-acid chain: Large ribosomal subunit protein uL5 (178 aa).

The protein belongs to the universal ribosomal protein uL5 family. In terms of assembly, part of the 50S ribosomal subunit; contacts the 5S rRNA and probably tRNA. Forms a bridge to the 30S subunit in the 70S ribosome.

Its function is as follows. This is one of the proteins that bind and probably mediate the attachment of the 5S RNA into the large ribosomal subunit, where it forms part of the central protuberance. In the 70S ribosome it contacts protein S13 of the 30S subunit (bridge B1b), connecting the 2 subunits; this bridge is implicated in subunit movement. May contact the P site tRNA; the 5S rRNA and some of its associated proteins might help stabilize positioning of ribosome-bound tRNAs. The chain is Large ribosomal subunit protein uL5 from Archaeoglobus fulgidus (strain ATCC 49558 / DSM 4304 / JCM 9628 / NBRC 100126 / VC-16).